The following is a 189-amino-acid chain: Peroxiredoxin sll1621 (189 aa).

Positions 2–177 (TPERVPSVVF…MLAYLKGAEA (176 aa)) constitute a Thioredoxin domain. The active-site Cysteine sulfenic acid (-SOH) intermediate (for peroxiredoxin activity) is the Cys-55.

It belongs to the peroxiredoxin family. Prx5 subfamily. In terms of assembly, monomer.

It carries out the reaction a hydroperoxide + 2 glutathione = an alcohol + glutathione disulfide + H2O. In terms of biological role, thiol-specific peroxidase that catalyzes the reduction of hydrogen peroxide and organic hydroperoxides to water and alcohols, respectively. Plays a role in cell protection against oxidative stress by detoxifying peroxides. The protein is Peroxiredoxin sll1621 of Synechocystis sp. (strain ATCC 27184 / PCC 6803 / Kazusa).